Reading from the N-terminus, the 324-residue chain is FCS-Like Zinc finger 11 (324 aa).

Residues 266 to 309 (NFLGICNFCNKKLGGGDDIYMYREKSFCSEECRSEEMMIDEEDL) form an FLZ-type zinc finger.

It belongs to the FLZ family. Interacts with KIN10 and KIN11 via its FLZ-type zinc finger domain. Forms heterodimer with FLZ2 in vitro.

It is found in the cytoplasm. It localises to the nucleus. Functionally, may act as an adapter to facilitate the interaction of SnRK1 complex with effector proteins, conferring tissue- and stimulus-type specific differences in the SnRK1 regulation pathway. This chain is FCS-Like Zinc finger 11, found in Arabidopsis thaliana (Mouse-ear cress).